Consider the following 183-residue polypeptide: MAMNTETLSLIKQSIKTIPNYPKEGILFRDVTSLLENAVAYKATIDLLVEQYRNKGFTKIVGTEARGFLFGAPLALELGIGFVPVRKPGKLPRATISQSYELEYGHDSLEIHTDAITANDKVLVVDDLLATGGTIEATVKLIRQLGGEVQDAAFVISLPDLGGEARLTALGLELVKLCEFEGE.

This sequence belongs to the purine/pyrimidine phosphoribosyltransferase family. As to quaternary structure, homodimer.

The protein localises to the cytoplasm. It catalyses the reaction AMP + diphosphate = 5-phospho-alpha-D-ribose 1-diphosphate + adenine. It functions in the pathway purine metabolism; AMP biosynthesis via salvage pathway; AMP from adenine: step 1/1. Catalyzes a salvage reaction resulting in the formation of AMP, that is energically less costly than de novo synthesis. This is Adenine phosphoribosyltransferase from Shewanella sp. (strain MR-7).